The primary structure comprises 607 residues: Fatty acid amide hydrolase (607 aa).

Catalysis depends on charge relay system residues lysine 205 and serine 281. Glycine 302–serine 305 serves as a coordination point for substrate. Serine 305 acts as the Acyl-ester intermediate in catalysis.

It belongs to the amidase family. As to quaternary structure, forms homodimers. In terms of tissue distribution, expressed in roots, leaves and flowers. Expressed in seedlings, flowers, roots, siliques, seeds and leaves.

The protein resides in the endoplasmic reticulum membrane. Its subcellular location is the cell membrane. It catalyses the reaction N-(5Z,8Z,11Z,14Z-eicosatetraenoyl)-ethanolamine + H2O = ethanolamine + (5Z,8Z,11Z,14Z)-eicosatetraenoate. It carries out the reaction N-(9Z,12Z-octadecadienoyl)-ethanolamine + H2O = ethanolamine + (9Z,12Z)-octadecadienoate. The enzyme catalyses N-hexadecanoylethanolamine + H2O = ethanolamine + hexadecanoate. The catalysed reaction is N-tetradecanoylethanolamine + H2O = tetradecanoate + ethanolamine. It catalyses the reaction N-dodecanoylethanolamine + H2O = dodecanoate + ethanolamine. With respect to regulation, inhibited by methyl arachidonyl fluorophosphonate (MAFP). Catalyzes the hydrolysis of bioactive endogenous fatty acid amides to their corresponding acids. The hydrolysis of endogenous amidated lipids terminates their participation as lipid mediators in various signaling systems. Converts a wide range of N-acylethanolamines (NAEs) to their corresponding free fatty acids and ethanolamine. Can use oleamide as substrate, but not indole-3-acetamide, 1-naphtalene-acetamide, nicotinic acid amide or L-asparagine. Can use 2-arachidonylglycerol as substrate. Participates in the regulation of plant growth. Hydrolyzes N-dodecanoylethanolamine, which is has a growth inhibitory effect on seedling growth. Involved in plant defense signaling. Involved in abscisic acid (ABA) signaling through mechanisms that are independent of the catalytic activity. Involved in the regulation of flowering time. Catalyzes the hydrolysis of N-acyl L-homoserine lactones (AHLs), which are a class of signaling molecules produced by bacteria for quorum sensing. Accumulation of L-homoserine appears to encourage plant growth at low concentrations by stimulating transpiration, but higher concentrations inhibit growth by stimulating ethylene production. The polypeptide is Fatty acid amide hydrolase (Arabidopsis thaliana (Mouse-ear cress)).